Reading from the N-terminus, the 358-residue chain is CX3C chemokine receptor 1 (358 aa).

Topologically, residues 1-26 (MHTTLPESTSENFEYYDLAEACDMGD) are extracellular. Residues 27–47 (IVALGTVFVVILYSLVFAFGL) form a helical membrane-spanning segment. At 48-68 (VGNLLVVFALINSQRSKSITD) the chain is on the cytoplasmic side. Residues 69–89 (IYLLNLALSDLLFVATLPFWT) form a helical membrane-spanning segment. At 90–105 (HYVINEQGLHHATCKL) the chain is on the extracellular side. C103 and C176 are disulfide-bonded. The chain crosses the membrane as a helical span at residues 106–126 (ITAFFFIGFFGGIFFITVISV). Residues 127-147 (DRFLAIVLAANSMSNRTVQHG) lie on the Cytoplasmic side of the membrane. Residues 148–168 (VTTSLGVWAAAILVATPQFMF) form a helical membrane-spanning segment. Over 169-186 (TREKENECFGDYPEILQE) the chain is Extracellular. A helical transmembrane segment spans residues 187 to 207 (IWPVILNTEINFLGFLLPLLI). Over 208-232 (MSYCYFRIMQTLFSCKNHKKAKAIR) the chain is Cytoplasmic. A helical membrane pass occupies residues 233–253 (LIFLVVVVFFLFWTPYNVMIF). At 254–275 (LQTLNLYDFFPKCDVKRDLKLA) the chain is on the extracellular side. Residues 276–296 (ISVTETIAFSHCCLNPLIYAF) traverse the membrane as a helical segment. At 297 to 358 (AGEKFRRYLY…TSDGDASILL (62 aa)) the chain is on the cytoplasmic side. Phosphothreonine is present on T349.

It belongs to the G-protein coupled receptor 1 family. As to quaternary structure, found in a ternary complex with CX3CL1 and ITGAV:ITGB3 or ITGA4:ITGB1. Post-translationally, this protein is not N-glycosylated which is unusual for G-protein-coupled receptors.

The protein localises to the cell membrane. Functionally, receptor for the C-X3-C chemokine fractalkine (CX3CL1) present on many early leukocyte cells; CX3CR1-CX3CL1 signaling exerts distinct functions in different tissue compartments, such as immune response, inflammation, cell adhesion and chemotaxis. CX3CR1-CX3CL1 signaling mediates cell migratory functions. Responsible for the recruitment of natural killer (NK) cells to inflamed tissues. Acts as a regulator of inflammation process leading to atherogenesis by mediating macrophage and monocyte recruitment to inflamed atherosclerotic plaques, promoting cell survival. Involved in airway inflammation by promoting interleukin 2-producing T helper (Th2) cell survival in inflamed lung. Involved in the migration of circulating monocytes to non-inflamed tissues, where they differentiate into macrophages and dendritic cells. Acts as a negative regulator of angiogenesis, probably by promoting macrophage chemotaxis. Plays a key role in brain microglia by regulating inflammatory response in the central nervous system (CNS) and regulating synapse maturation. Required to restrain the microglial inflammatory response in the CNS and the resulting parenchymal damage in response to pathological stimuli. Involved in brain development by participating in synaptic pruning, a natural process during which brain microglia eliminates extra synapses during postnatal development. Synaptic pruning by microglia is required to promote the maturation of circuit connectivity during brain development. Acts as an important regulator of the gut microbiota by controlling immunity to intestinal bacteria and fungi. Expressed in lamina propria dendritic cells in the small intestine, which form transepithelial dendrites capable of taking up bacteria in order to provide defense against pathogenic bacteria. Required to initiate innate and adaptive immune responses against dissemination of commensal fungi (mycobiota) component of the gut: expressed in mononuclear phagocytes (MNPs) and acts by promoting induction of antifungal IgG antibodies response to confer protection against disseminated C.albicans or C.auris infection. Also acts as a receptor for C-C motif chemokine CCL26, inducing cell chemotaxis. In Bos taurus (Bovine), this protein is CX3C chemokine receptor 1.